The chain runs to 347 residues: MILISDATLRDGNHAIRHQLSAAQIHAYARAADEAGIDVVEVGHGNGLGGSSCLLGQTPIGDRLMLETARAALRTSRLGVHFIPGLGKAADISLALEIGVDVVRVATHCTEANVSARFIEQTRAAGRTAFGVLMMSHMAPPDALLAQAKLMERYGAQAVVLMDSAGYSTPSLVRAKVERLVDGLDIDVGFHAHNNLGLAVANSLVALEAGARIVDACVKGFGAGAGNTQLETLVAAMEREGHDTRTTFERVMTLARGTETFLNPKTPHIQPANIASGLYGLFSGYVPHIQKAAQEFGVNEFELYKRLAERKLVAGQEDIIIEEASRLARERDVQRATGGVRVRELSA.

Positions 2-252 constitute a Pyruvate carboxyltransferase domain; that stretch reads ILISDATLRD…DTRTTFERVM (251 aa). 10 to 11 is a binding site for substrate; that stretch reads RD. Mn(2+) is bound at residue Asp-11. His-14 functions as the Proton acceptor in the catalytic mechanism. Ser-164 and His-191 together coordinate substrate. His-191 and His-193 together coordinate Mn(2+).

This sequence belongs to the 4-hydroxy-2-oxovalerate aldolase family.

The catalysed reaction is (S)-4-hydroxy-2-oxopentanoate = acetaldehyde + pyruvate. The protein is 4-hydroxy-2-oxovalerate aldolase (mhpE) of Burkholderia pseudomallei (strain 1710b).